Consider the following 78-residue polypeptide: MEGDIAQMGQFIGAGLAAIGSGAAAIGVGHVAGNFLAGALRNPSAAAGQTATLFIGIAFAEALGIFAFLVALLLMFAV.

2 helical membrane passes run 11–31 (FIGAGLAAIGSGAAAIGVGHV) and 53–73 (LFIGIAFAEALGIFAFLVALL).

It belongs to the ATPase C chain family. In terms of assembly, F-type ATPases have 2 components, F(1) - the catalytic core - and F(0) - the membrane proton channel. F(1) has five subunits: alpha(3), beta(3), gamma(1), delta(1), epsilon(1). F(0) has four main subunits: a(1), b(1), b'(1) and c(10-14). The alpha and beta chains form an alternating ring which encloses part of the gamma chain. F(1) is attached to F(0) by a central stalk formed by the gamma and epsilon chains, while a peripheral stalk is formed by the delta, b and b' chains.

The protein resides in the cell inner membrane. Its function is as follows. F(1)F(0) ATP synthase produces ATP from ADP in the presence of a proton or sodium gradient. F-type ATPases consist of two structural domains, F(1) containing the extramembraneous catalytic core and F(0) containing the membrane proton channel, linked together by a central stalk and a peripheral stalk. During catalysis, ATP synthesis in the catalytic domain of F(1) is coupled via a rotary mechanism of the central stalk subunits to proton translocation. In terms of biological role, key component of the F(0) channel; it plays a direct role in translocation across the membrane. A homomeric c-ring of between 10-14 subunits forms the central stalk rotor element with the F(1) delta and epsilon subunits. In Jannaschia sp. (strain CCS1), this protein is ATP synthase subunit c.